Reading from the N-terminus, the 56-residue chain is Ovomucoid (56 aa).

A Kazal-like domain is found at 6–56 (VDCSEYPKPACTLEYRPLCGSDNKTYGNKCNFCNAVVESNGTLTLSHFGKC). 3 disulfide bridges follow: Cys8/Cys38, Cys16/Cys35, and Cys24/Cys56. Asn45 carries N-linked (GlcNAc...) asparagine glycosylation.

The protein resides in the secreted. The polypeptide is Ovomucoid (Meleagris ocellata (Ocellated turkey)).